The sequence spans 176 residues: Deoxyuridine 5'-triphosphate nucleotidohydrolase (176 aa).

Substrate contacts are provided by residues 67–69, Asn80, 84–86, and Lys94; these read RSG and TVD. A disordered region spans residues 141–176; the sequence is GGFGSTGGHASVDGAEGGITHGGNSYASVVSDREGQ.

It belongs to the dUTPase family. The cofactor is Mg(2+).

The enzyme catalyses dUTP + H2O = dUMP + diphosphate + H(+). The protein operates within pyrimidine metabolism; dUMP biosynthesis; dUMP from dCTP (dUTP route): step 2/2. This enzyme is involved in nucleotide metabolism: it produces dUMP, the immediate precursor of thymidine nucleotides and it decreases the intracellular concentration of dUTP so that uracil cannot be incorporated into DNA. The sequence is that of Deoxyuridine 5'-triphosphate nucleotidohydrolase from Streptomyces griseus subsp. griseus (strain JCM 4626 / CBS 651.72 / NBRC 13350 / KCC S-0626 / ISP 5235).